A 521-amino-acid chain; its full sequence is Hyccin (521 aa).

T306 carries the post-translational modification Phosphothreonine. S321 carries the post-translational modification Phosphoserine. Positions 355-373 are enriched in low complexity; the sequence is AASSTSQSGLSNSSHNCSN. The tract at residues 355-413 is disordered; sequence AASSTSQSGLSNSSHNCSNKTSVGKNQRRSGGSKAGAKERETAGESCRDHFARKQTQRA. Residues 390 to 406 show a composition bias toward basic and acidic residues; sequence GAKERETAGESCRDHFA. A phosphoserine mark is found at S415, S422, S433, S453, and S465.

It belongs to the Hyccin family. Component of a phosphatidylinositol 4-kinase (PI4K) complex, composed of PI4KA, EFR3 (EFR3A or EFR3B), TTC7 (TTC7A or TTC7B) and HYCC (HYCC1 or HYCC2). Interacts with TTC7 (TTC7A or TTC7B), interaction is direct. Predominantly expressed in the central nervous system, where it is found in neurons but not in myelinating cells. Lower abundance is observed in peripheral neurons, where it is detectable only at early postnatal ages. Expressed in both oligodendrocytes and neurons.

Its subcellular location is the cytoplasm. It is found in the cytosol. It localises to the cell membrane. Component of a complex required to localize phosphatidylinositol 4-kinase (PI4K) to the plasma membrane. The complex acts as a regulator of phosphatidylinositol 4-phosphate (PtdIns(4)P) synthesis. HYCC1 plays a key role in oligodendrocytes formation, a cell type with expanded plasma membrane that requires generation of PtdIns(4)P. Its role in oligodendrocytes formation probably explains its importance in myelination of the central and peripheral nervous system. May also have a role in the beta-catenin/Lef signaling pathway. This Mus musculus (Mouse) protein is Hyccin (Hycc1).